The primary structure comprises 268 residues: Tryptophan synthase alpha chain (268 aa).

Residues Glu49 and Asp60 each act as proton acceptor in the active site.

The protein belongs to the TrpA family. In terms of assembly, tetramer of two alpha and two beta chains.

The enzyme catalyses (1S,2R)-1-C-(indol-3-yl)glycerol 3-phosphate + L-serine = D-glyceraldehyde 3-phosphate + L-tryptophan + H2O. The protein operates within amino-acid biosynthesis; L-tryptophan biosynthesis; L-tryptophan from chorismate: step 5/5. The alpha subunit is responsible for the aldol cleavage of indoleglycerol phosphate to indole and glyceraldehyde 3-phosphate. In Pseudomonas paraeruginosa (strain DSM 24068 / PA7) (Pseudomonas aeruginosa (strain PA7)), this protein is Tryptophan synthase alpha chain.